Reading from the N-terminus, the 576-residue chain is MEAKGKVVGVIGNLVTIEMVGTVSMNEIVFIKTGGQSLKAEIIRIRDGEVDAQVFEMTRGIAVGDDVEFTDKLLTVELGPGLLSQVYDGLQNPLPELATKCGFFLERGLYLSALDRNKKWSFNATAKVGDFIVAGDFLGFVIEGTINHKIMVPFDRRDSYRIIEIVGDGDYTVDDRIAVIEDDAGGKHIITMSFHWPVKVPVTSYKKRLIPNETMVTQTRIIDTFFPVAKGGTFCIPGPFGAGKTVLQQVTSRNADVDIVIIAACGERAGEVVETLKEFPELTDPRTGKSLMERTCIICNTSSMPVAAREASVYTAITISEYYRQMGLDILLLADSTSRWAQAMREMSGRLEEIPGDEAFPAYLESVIASFYERAGVVVLNNGSVGSVTVGGSVSPAGGNFEEPVTQATLKVVGAFHGLTRERSDARKFPAINPLDSWSKYRGVVEYEATEYARAFLVKGNEVNQMMRVVGEDGVSIDDFVVYLKSELLDSCYLQQNSFDSVDAAVSFERQNYMFNILYKILQSDFKFENKLEARSFINDLRQNILDMNLAPFKQEKFNKLEINLKNLLRSKKLDF.

238 to 245 lines the ATP pocket; it reads GPFGAGKT.

It belongs to the ATPase alpha/beta chains family.

It catalyses the reaction ATP + H2O + 4 H(+)(in) = ADP + phosphate + 5 H(+)(out). In terms of biological role, produces ATP from ADP in the presence of a proton gradient across the membrane. The V-type alpha chain is a catalytic subunit. This is V-type ATP synthase alpha chain from Borrelia recurrentis (strain A1).